The following is a 1940-amino-acid chain: Myosin-13 (1940 aa).

The Myosin N-terminal SH3-like domain occupies 33–82; it reads DSKKACFAMDDKEMYVKGMIQSRENDKVTVKTLDDRTLTLNSDQVFPMNP. The 697-residue stretch at 86 to 782 folds into the Myosin motor domain; that stretch reads DKIEDMAMMT…LLGLLEEMRD (697 aa). N6,N6,N6-trimethyllysine is present on Lys-130. Position 179–186 (179–186) interacts with ATP; that stretch reads GESGAGKT. Actin-binding regions lie at residues 659 to 681 and 761 to 775; these read LNKL…IPNE and RFGH…GLLG. One can recognise an IQ domain in the interval 785–814; sequence LVTLMTRTQAICRGYLMRVEFKKMMERRES. Positions 843-1940 form a coiled coil; that stretch reads LLKSAEAERE…RDVGAQKMEE (1098 aa). The interval 1886 to 1940 is disordered; sequence RQAEEAEEQANTQMSKCRRVQHELEEAEERADIAESQVNKLRAKSRDVGAQKMEE. Residues 1929-1940 are compositionally biased toward basic and acidic residues; the sequence is KSRDVGAQKMEE.

This sequence belongs to the TRAFAC class myosin-kinesin ATPase superfamily. Myosin family. In terms of assembly, muscle myosin is a hexameric protein that consists of 2 heavy chain subunits (MHC), 2 alkali light chain subunits (MLC) and 2 regulatory light chain subunits (MLC-2).

It is found in the cytoplasm. Its subcellular location is the myofibril. Fast twitching myosin mediating the high-velocity and low-tension contractions of specific striated muscles. The polypeptide is Myosin-13 (MYH13) (Canis lupus familiaris (Dog)).